We begin with the raw amino-acid sequence, 309 residues long: Vacuolar membrane protein YOR292C (309 aa).

The Vacuolar segment spans residues 1–52 (MPLQLFGRDQIVVHYDNGNMSNDDQNHQSVLGSWTRRAAAALRTLMNKRIQR). Asparagine 19 carries an N-linked (GlcNAc...) asparagine glycan. A helical transmembrane segment spans residues 53 to 73 (ITLTHWLLLVIWVTSLWKFTS). Residues 74–81 (HYRQLYAN) lie on the Cytoplasmic side of the membrane. A helical membrane pass occupies residues 82–102 (SAVFATLCTNILLFGISDILA). The Vacuolar segment spans residues 103–183 (QSIACFYSYH…KTDTFDFFRW (81 aa)). Asparagine 121 carries N-linked (GlcNAc...) asparagine glycosylation. The chain crosses the membrane as a helical span at residues 184–204 (GCFMFWGFFISFFQAPWYKFL). Residues 205-225 (NFFYTEDPTVVQVFERVLSDQ) are Cytoplasmic-facing. Residues 226 to 246 (LLYSPISLYCFFMFSNYVMEG) form a helical membrane-spanning segment. The Vacuolar segment spans residues 247-260 (GDKDTLGKKIQRLY). Residues 261-281 (ISTLGCNYLVWPMVQFINFLI) traverse the membrane as a helical segment. Over 282 to 309 (MPRDFQAPFSSSVGVVWNCFLSMRNASK) the chain is Cytoplasmic.

The protein belongs to the peroxisomal membrane protein PXMP2/4 family. In terms of processing, N-glycosylated.

It localises to the vacuole membrane. This Saccharomyces cerevisiae (strain ATCC 204508 / S288c) (Baker's yeast) protein is Vacuolar membrane protein YOR292C.